Consider the following 381-residue polypeptide: Succinyl-diaminopimelate desuccinylase (381 aa).

His-69 contacts Zn(2+). Residue Asp-71 is part of the active site. Residue Asp-103 participates in Zn(2+) binding. Glu-137 (proton acceptor) is an active-site residue. Zn(2+)-binding residues include Glu-138, Glu-166, and His-355.

It belongs to the peptidase M20A family. DapE subfamily. In terms of assembly, homodimer. Requires Zn(2+) as cofactor. Co(2+) serves as cofactor.

It catalyses the reaction N-succinyl-(2S,6S)-2,6-diaminopimelate + H2O = (2S,6S)-2,6-diaminopimelate + succinate. It participates in amino-acid biosynthesis; L-lysine biosynthesis via DAP pathway; LL-2,6-diaminopimelate from (S)-tetrahydrodipicolinate (succinylase route): step 3/3. In terms of biological role, catalyzes the hydrolysis of N-succinyl-L,L-diaminopimelic acid (SDAP), forming succinate and LL-2,6-diaminopimelate (DAP), an intermediate involved in the bacterial biosynthesis of lysine and meso-diaminopimelic acid, an essential component of bacterial cell walls. This is Succinyl-diaminopimelate desuccinylase from Rickettsia felis (strain ATCC VR-1525 / URRWXCal2) (Rickettsia azadi).